The following is a 950-amino-acid chain: MDTSGGNLDSLDDTEPLPELSFEDFLEPTSEKSSQHMEIEALDSEEDNIGGEDLADPANDSLNTPQFKKNVVHILEDKRLNSSGLTVLKSHAIKMVTAGGTPPAKAQVTDVKILNKLKPIPSSTLKIGSTTIATKSTPGSITKTLGNLTQIRTKDGQVIFVQKSVPGTQSSTAVTGSPSGGIRRLVAPSGIQKAVLSKGVTMASTGLVKAAVPAKASTSVPGSAITLKGIQPLAGGTAKASTSSTTATTSPSLAQPNKIQVVRTADGKIIKINQAGPSLLVNAKQGTGTTVTPGGSAATSVKLSPSTGNVVLNKPVGQVVVRTETPVKTATGSVASASATPGKMLVQSGGKQILVSNKNIIKLSPNASATSSTTHTTGGQTPSTSSGLHAIQLPGKGGIQYVRVLNNNKSAAGTSATASIPKTVQTQKITVVRPPAATGVPATSTTTSAAAASPAAASKANLAMGNTNKIVMRSMGGSIVPLPSVQTLVSKRALGAISNASKPASAASSSATPSASQELPRKHRLTDLNVQLKQSASVSSEASDSSDAGPEAKKPRYVITMQQGSQKAASQPVQKLINRTANVQRVVSSSTSPSSNSTKKIYNYVQPTGSNGAKYMICNSGVPQSSTSAMRRGYTGYVENKTRRPPPISPQQHRFKQMGPQQQSKHQQLQAQAKQRIRQQQLPTEQSTPIKVEPKLPTLPPGVKANVPAKPLFEVLKPPATAAAAGAVDPLGGMTSRRKHCNCSKSQCLKLYCDCFANGEFCQDCTCKDCFNNLDYEVERERAIRSCLDRNPSAFKPKITAPNSGDMRLHNKGCNCKRSGCLKNYCECYEAKIPCSSICKCVGCRNMEDRPDVDMDSLDGLMGVEGQKKDKAKNKQLNENRANIYFTDDVIEATIMCMISRIVMHEKQNVAVEDMEREVMEEMGESLTQIIAFAKEKQETSQIDESKPSS.

5 disordered regions span residues 1 to 63 (MDTS…DSLN), 366 to 387 (NASA…TSSG), 500 to 523 (ASKP…PRKH), 533 to 552 (KQSA…GPEA), and 638 to 702 (VENK…LPPG). A compositionally biased stretch (acidic residues) spans 10-26 (SLDDTEPLPELSFEDFL). Basic and acidic residues predominate over residues 29-39 (TSEKSSQHMEI). Residues 40 to 55 (EALDSEEDNIGGEDLA) show a composition bias toward acidic residues. Low complexity-rich tracts occupy residues 366-386 (NASA…STSS), 500-516 (ASKP…PSAS), 535-548 (SASV…SSDA), and 661-682 (QQQS…QQQL). The region spanning 737-849 (RRKHCNCSKS…KCVGCRNMED (113 aa)) is the CRC domain.

The protein belongs to the lin-54 family. Component of the DREAM complex at least composed of Myb, Caf1-55, mip40, mip120, mip130, E2f2, Dp, Rbf, Rbf2, lin-52, HDAC1/Rpd3 and l(3)mbt.

The protein resides in the nucleus. In terms of biological role, component of the DREAM complex, a multiprotein complex that can both act as a transcription activator or repressor depending on the context. In follicle cells, the complex plays a central role in the site-specific DNA replication at the chorion loci. During development, the complex represses transcription of developmentally controlled E2F target genes. The polypeptide is Protein lin-54 homolog (mip120) (Drosophila melanogaster (Fruit fly)).